The primary structure comprises 82 residues: Exodeoxyribonuclease 7 small subunit (82 aa).

Belongs to the XseB family. As to quaternary structure, heterooligomer composed of large and small subunits.

The protein localises to the cytoplasm. The catalysed reaction is Exonucleolytic cleavage in either 5'- to 3'- or 3'- to 5'-direction to yield nucleoside 5'-phosphates.. In terms of biological role, bidirectionally degrades single-stranded DNA into large acid-insoluble oligonucleotides, which are then degraded further into small acid-soluble oligonucleotides. This Mannheimia succiniciproducens (strain KCTC 0769BP / MBEL55E) protein is Exodeoxyribonuclease 7 small subunit.